The following is a 172-amino-acid chain: Neuropeptide-like protein nlp-8 (172 aa).

The N-terminal stretch at 1 to 26 (MSQKLLPISPLQLLFLQCLLIGFTAA) is a signal peptide.

In terms of processing, may be processed by convertase egl-3.

It localises to the secreted. Functionally, neuropeptide-like protein. Plays a role in behaviors associated with a sleep-like state induced by stress (SIS), acting in concert with the FARP (FMRFamide related) peptides, flp-13 and flp-24. This chain is Neuropeptide-like protein nlp-8, found in Caenorhabditis elegans.